The primary structure comprises 287 residues: mRNA-capping enzyme regulatory subunit OPG124 (287 aa).

This sequence belongs to the orthopoxvirus mRNA-capping enzyme regulatory subunit family. In terms of assembly, interacts with the catalytic subunit OPG113.

The protein localises to the virion. In terms of biological role, regulatory subunit of the mRNA cap enzyme which stabilizes the catalytic subunit and enhances its methyltransferase activity through an allosteric mechanism. Heterodimeric mRNA capping enzyme catalyzes the linkage of a N7-methyl-guanosine moiety to the first transcribed nucleotide (cap 0 structure), whereas the methyltransferase OPG102 is responsible for a second methylation at the 2'-O position of the ribose (cap 1 structure). Also involved in early viral gene transcription termination and intermediate viral gene transcription initiation. Early gene transcription termination requires the termination factor VTF, the DNA-dependent ATPase NPH-I/OPG123 and the RAP94/OPG109 subunit of the viral RNA polymerase, as well as the presence of a specific termination motif. Binds, together with RAP94/OPG109, to the termination motif 5'-UUUUUNU-3' in the nascent early mRNA. This Vaccinia virus (strain Copenhagen) (VACV) protein is mRNA-capping enzyme regulatory subunit OPG124 (OPG124).